Here is a 1396-residue protein sequence, read N- to C-terminus: MRPVCTVVVDGLPSESTSSSYPGPVSVSDMSLLHALGPVQTWLGQELEKCGIDAMIYSRYILSLLLHDSYDYDLQEQENDILSWEKGAYKKWGRSKKKCSDLTLEEMKKQAAVQCLRSASDESSGIETLVEELCCRLKDLQSEQEEKIHKKLEGSPSPEEELSPTAKDQVEMYYEAFPPLSEKPVCLQEIMTVWNKSKPCSYSSSSSSSTVPPASTDTSSPKDCNSESEAVRERSSVASVPMHEKAQSRSRHEKESKLSSSTIEEKPAFYKRQIRHKPEGKTRPRSWSSGSSEAGSSSSGNQGELKASMKYVKVRHKAREIRNRKGRNGQNRHSLKHCGKAERGVHAGSGGSSSSSSNGSIRQLCKRGKRPAKETGRSDSGNTAVKDLYVDSRNNKEYKEEPLWYTEPIAEYFVPLSRKSKLETTYRNREDTSTLTAEAVEDLSDSVRGLCISNSNIHRTYLAAGTFIDGHFVEMPAVINEDIDLAGTSLCSLPEDNKYLDDIHLSELTHFYEVDIDQSMLDPGASETMQGESRILNMIRQKSKENTDFEAECCIVLDGMELQGERAIWTDSTSSVGAEGFFLQDLGNLAQFWECCSSSSGDADGESFGGDSPVRLSPILDSTMLSSHILAGNQEPFSNINEGSGINSCFSVFEVQCSNSVLPFSFETLNLGSEHADSSANMLGKTQSRLLIWTKNSAFEENEHCSNLSTRTCSPWSHSEEARSDNETLNIQFEESTQFTAEDINYVVPRVSSDFVDEELLDFLQDETCQQNSRTLGEIPTLVFKKRSKLESVCGIQLEQKAESKNFETTHACSESSPHGDGYSSGVIKDIWTKMVGRSSVAAVETERTGEELFSTDVNNYCCCLDTEAKMEALQEPSRAVQRSEYHLWEGQKENMEKRAFVSSELSKVDGGDYTTPSKPWDVAQDKENTFILGGVYGELKTFNSDGEWAVVPPGHTKGSLLQCAASDVVTIAGTDVFMTPGNSFAPGHRQLWKPFVSFEQSDMPKRGENGVNKGFSFIFHEDLLGACSNFQVEDPGLEYSLSSFDLSNPFSQVLHVECSFEPEGIASFSPSFKPKSILCSDSDSEVFHPRICGVERTQYRAIRISPRTHFRPISASELSPGGGSESEFESEKDEASVPIPSHVDVFEDPQADLKPLEEDAEKEGHYYGKLELESGKFLPRLKKSGMEKSAQTSLDSQEEATGILPKQNQCLECNFNESLEINLESSAANCKIMTQCEEEMSEFCSCKAGCQFPACEDNPVSSGQLEEFPVLNTDVQEVTRNQEKQSWWEKALYSPLFPTSECEECYTNAKGENGIEECPDAKETPSREERLLDFNRVSSVYEARCTGERGSETKPNGLHRKMCSSASSDTGDTGSEAGGEWVGPSREELFSRTHL.

An ATP-binding site is contributed by A88 to S95. Disordered regions lie at residues E146 to T165 and K198 to L388. Low complexity predominate over residues K198–P221. Over residues M242–A268 the composition is skewed to basic and acidic residues. The span at S286–G300 shows a compositional bias: low complexity. The span at V312–R327 shows a compositional bias: basic residues. Phosphoserine occurs at positions 817 and 1083. A disordered region spans residues P1113–S1137. S1197 and S1339 each carry phosphoserine. Positions T1347–L1396 are disordered. Residues S1365 to S1376 are compositionally biased toward low complexity. Residues S1386 to L1396 are compositionally biased toward basic and acidic residues.

This is an uncharacterized protein from Mus musculus (Mouse).